The sequence spans 621 residues: UvrABC system protein C (621 aa).

One can recognise a GIY-YIG domain in the interval 13-92 (EKPGVYMMRN…IKENRPKYNV (80 aa)). The UVR domain occupies 205 to 240 (DELVRKIEEKMKAAAISMDFENAARYRDQIIALNNI).

This sequence belongs to the UvrC family. As to quaternary structure, interacts with UvrB in an incision complex.

The protein resides in the cytoplasm. The UvrABC repair system catalyzes the recognition and processing of DNA lesions. UvrC both incises the 5' and 3' sides of the lesion. The N-terminal half is responsible for the 3' incision and the C-terminal half is responsible for the 5' incision. In Alkaliphilus oremlandii (strain OhILAs) (Clostridium oremlandii (strain OhILAs)), this protein is UvrABC system protein C.